The following is a 918-amino-acid chain: Dual serine/threonine and tyrosine protein kinase (918 aa).

Over residues M1–N19 the composition is skewed to basic and acidic residues. Residues M1–S29 form a disordered region. Residues P643–L897 enclose the Protein kinase domain. Residues L649–V657 and K672 each bind ATP. D768 (proton acceptor) is an active-site residue.

This sequence belongs to the protein kinase superfamily. Ser/Thr protein kinase family.

The protein resides in the cytoplasm. It is found in the cell membrane. Its subcellular location is the apical cell membrane. It localises to the basolateral cell membrane. The protein localises to the cell junction. The enzyme catalyses L-seryl-[protein] + ATP = O-phospho-L-seryl-[protein] + ADP + H(+). It catalyses the reaction L-threonyl-[protein] + ATP = O-phospho-L-threonyl-[protein] + ADP + H(+). It carries out the reaction L-tyrosyl-[protein] + ATP = O-phospho-L-tyrosyl-[protein] + ADP + H(+). Its function is as follows. May act as a positive regulator of ERK phosphorylation downstream of fibroblast growth factor-receptor activation. May induce both caspase-dependent apoptosis and caspase-independent cell death. May play a role in the embryonic development. The sequence is that of Dual serine/threonine and tyrosine protein kinase (dstyk) from Xenopus tropicalis (Western clawed frog).